A 263-amino-acid chain; its full sequence is Protein M1425_2021 (263 aa).

Belongs to the CinA family.

In Saccharolobus islandicus (strain M.14.25 / Kamchatka #1) (Sulfolobus islandicus), this protein is Protein M1425_2021.